The following is a 217-amino-acid chain: Adenylate kinase (217 aa).

Residue 10–15 (GAGKGT) participates in ATP binding. The interval 30–59 (STGDMFRAAMKNETELGLKAKSFIDAGDLV) is NMP. Residues T31, R36, 57 to 59 (DLV), 85 to 88 (GFPR), and Q92 contribute to the AMP site. Residues 126 to 163 (GRRVSPTTGKTYHIVYNPPKVEGKCDIDGSDLIQRDDD) form an LID region. Residues R127 and 136–137 (TY) each bind ATP. Positions 160 and 171 each coordinate AMP. Residue Q199 coordinates ATP.

Belongs to the adenylate kinase family. Monomer.

Its subcellular location is the cytoplasm. The enzyme catalyses AMP + ATP = 2 ADP. The protein operates within purine metabolism; AMP biosynthesis via salvage pathway; AMP from ADP: step 1/1. Catalyzes the reversible transfer of the terminal phosphate group between ATP and AMP. Plays an important role in cellular energy homeostasis and in adenine nucleotide metabolism. This Shouchella clausii (strain KSM-K16) (Alkalihalobacillus clausii) protein is Adenylate kinase.